The following is a 625-amino-acid chain: Cysteine-rich receptor-like protein kinase 46 (625 aa).

The signal sequence occupies residues Met-1–Ser-23. The Extracellular segment spans residues Met-24–Asn-252. 2 Gnk2-homologous domains span residues Ile-29–Phe-130 and Val-135–Phe-237. Residues Asn-38, Asn-127, Asn-234, and Asn-252 are each glycosylated (N-linked (GlcNAc...) asparagine). Residues Leu-253 to Cys-273 form a helical membrane-spanning segment. Residues Gly-274–Met-625 lie on the Cytoplasmic side of the membrane. The region spanning Phe-331–Leu-621 is the Protein kinase domain. ATP is bound by residues Leu-337–Val-345 and Lys-359. Position 404 is a phosphotyrosine (Tyr-404). The active-site Proton acceptor is the Asp-454. Ser-458 is modified (phosphoserine). A Phosphothreonine modification is found at Thr-499. The residue at position 507 (Tyr-507) is a Phosphotyrosine.

This sequence belongs to the protein kinase superfamily. Ser/Thr protein kinase family. CRK subfamily.

Its subcellular location is the membrane. It carries out the reaction L-seryl-[protein] + ATP = O-phospho-L-seryl-[protein] + ADP + H(+). It catalyses the reaction L-threonyl-[protein] + ATP = O-phospho-L-threonyl-[protein] + ADP + H(+). This chain is Cysteine-rich receptor-like protein kinase 46, found in Arabidopsis thaliana (Mouse-ear cress).